The chain runs to 382 residues: Kelch domain-containing protein 3 (382 aa).

5 Kelch repeats span residues 25-77 (RVYS…PYMR), 88-138 (TVFL…VLGK), 139-189 (TMYI…TMLG), 191-249 (HMYV…GYNG), and 251-301 (LYIF…IVGD).

In terms of assembly, component of a CRL2(KLHDC3) complex, also named ECS(KLHDC3) complex, composed of CUL2, Elongin BC (ELOB and ELOC), RBX1 and substrate-specific adapter KLHDC3. May form oligomers as a KLHDC3-ELOB-ELOC complex; this interaction is likely autoinhibitory for the E3 ligase complex.

It is found in the cytoplasm. The protein operates within protein modification; protein ubiquitination. In terms of biological role, substrate-recognition component of a Cul2-RING (CRL2) E3 ubiquitin-protein ligase complex of the DesCEND (destruction via C-end degrons) pathway, which recognizes a C-degron located at the extreme C terminus of target proteins, leading to their ubiquitination and degradation. The C-degron recognized by the DesCEND pathway is usually a motif of less than ten residues and can be present in full-length proteins, truncated proteins or proteolytically cleaved forms. The CRL2(KLHDC3) complex specifically recognizes proteins with a glycine (Gly) at the C-terminus, leading to their ubiquitination and degradation: recognizes the C-terminal -Arg-(Xaa)n-Arg-Gly, -Arg-(Xaa)n-Lys-Gly, and -Arg-(Xaa)n-Gln-Gly degrons. The CRL2(KLHDC3) complex mediates ubiquitination and degradation of truncated SELENOV and SEPHS2 selenoproteins produced by failed UGA/Sec decoding, which end with a glycine. May be involved in meiotic recombination process. In Bos taurus (Bovine), this protein is Kelch domain-containing protein 3.